A 64-amino-acid polypeptide reads, in one-letter code: MPKMKSHRGACKRFKKTASGRVKREKMYGSHNLEKKNRKRTRRIHQSTLVDKTQEKQIKRMILA.

The segment at 20 to 42 (GRVKREKMYGSHNLEKKNRKRTR) is disordered. Over residues 25–35 (EKMYGSHNLEK) the composition is skewed to basic and acidic residues.

This sequence belongs to the bacterial ribosomal protein bL35 family.

The polypeptide is Large ribosomal subunit protein bL35 (Chlorobium phaeobacteroides (strain BS1)).